The chain runs to 129 residues: Small ribosomal subunit protein uS11 (129 aa).

The protein belongs to the universal ribosomal protein uS11 family. Part of the 30S ribosomal subunit. Interacts with proteins S7 and S18. Binds to IF-3.

Its function is as follows. Located on the platform of the 30S subunit, it bridges several disparate RNA helices of the 16S rRNA. Forms part of the Shine-Dalgarno cleft in the 70S ribosome. This chain is Small ribosomal subunit protein uS11, found in Lacticaseibacillus casei (strain BL23) (Lactobacillus casei).